The chain runs to 264 residues: Small ribosomal subunit protein eS1 (264 aa).

The disordered stretch occupies residues 233–264; it reads GEGGGAGKPSGDEAGAKVERADGYEPPVQESV. Residues 242 to 255 are compositionally biased toward basic and acidic residues; it reads SGDEAGAKVERADG.

This sequence belongs to the eukaryotic ribosomal protein eS1 family. As to quaternary structure, component of the small ribosomal subunit. Mature ribosomes consist of a small (40S) and a large (60S) subunit. The 40S subunit contains about 33 different proteins and 1 molecule of RNA (18S). The 60S subunit contains about 49 different proteins and 3 molecules of RNA (25S, 5.8S and 5S).

The protein localises to the cytoplasm. In Eimeria tenella (Coccidian parasite), this protein is Small ribosomal subunit protein eS1.